We begin with the raw amino-acid sequence, 277 residues long: MTPQIDRYAVFGNPIGHSKSPFIHTLFARQTNQSLTYTAECAPVGGFIEAAKAFFADGGKGCNVTLPFKEDAYQFASRLTERAQLAGAVNTLKKLDDGEIIGDNTDGAGLVQDLLQHQVVLEGARILIIGAGGAARGVIKPLLDQKPTSLTITNRTFSKAEELAELFSVYGPVTAKEMNIVAEEFDIIINSTSASLSGELPAISSSVFAANSTSYDMMYGKGDTTFNQWAKQHGAAHAYDGLGMLVGQAAESFMLWRGLRPGAKQILRELRKNLEGQ.

Shikimate is bound by residues 18-20 (SKS) and threonine 65. The Proton acceptor role is filled by lysine 69. Residue glutamate 81 participates in NADP(+) binding. Shikimate is bound by residues asparagine 90 and aspartate 106. NADP(+)-binding positions include 130–134 (GAGGA), 154–159 (NRTFSK), and methionine 217. Residue tyrosine 219 coordinates shikimate. Glycine 241 is an NADP(+) binding site.

This sequence belongs to the shikimate dehydrogenase family. Homodimer.

It catalyses the reaction shikimate + NADP(+) = 3-dehydroshikimate + NADPH + H(+). The protein operates within metabolic intermediate biosynthesis; chorismate biosynthesis; chorismate from D-erythrose 4-phosphate and phosphoenolpyruvate: step 4/7. In terms of biological role, involved in the biosynthesis of the chorismate, which leads to the biosynthesis of aromatic amino acids. Catalyzes the reversible NADPH linked reduction of 3-dehydroshikimate (DHSA) to yield shikimate (SA). The sequence is that of Shikimate dehydrogenase (NADP(+)) from Vibrio parahaemolyticus serotype O3:K6 (strain RIMD 2210633).